Reading from the N-terminus, the 185-residue chain is NEDD8-conjugating enzyme UBE2F (185 aa).

Methionine 1 carries the N-acetylmethionine modification. Positions 1–29 (MLTLASKLKRDDGLKGSRTAATASDSTRR) are interaction with UBA3. Positions 32–185 (VRDKLLVKEV…VDDYIKRYAR (154 aa)) constitute a UBC core domain. Cysteine 116 (glycyl thioester intermediate) is an active-site residue.

It belongs to the ubiquitin-conjugating enzyme family. UBE2F subfamily. In terms of assembly, interacts with UBA3 and RBX2. Interacts (N-terminally acetylated form) with (via DCUN1 domain) DCUN1D1, DCUN1D2, DCUN1D3, DCUN1D4 and DCUN1D5. In terms of processing, the acetylation of Met-1 increases affinity for DCUN1D3 by about 2 orders of magnitude and is crucial for NEDD8 transfer to cullins. In terms of tissue distribution, widely expressed (at protein level).

It carries out the reaction [E1 NEDD8-activating enzyme]-S-[NEDD8 protein]-yl-L-cysteine + [E2 NEDD8-conjugating enzyme]-L-cysteine = [E1 NEDD8-activating enzyme]-L-cysteine + [E2 NEDD8-conjugating enzyme]-S-[NEDD8-protein]-yl-L-cysteine.. Its pathway is protein modification; protein neddylation. Accepts the ubiquitin-like protein NEDD8 from the UBA3-NAE1 E1 complex and catalyzes its covalent attachment to other proteins. Together with the E3 ubiquitin ligase RNF7/RBX2, specifically neddylates cullin-5 (CUL5). Does not neddylate CUL1, CUL2, CUL3, CUL4A or CUL4B. Mediates neddylation of the CUL9-RBX1 complex. Its function is as follows. (Microbial infection) Following infection by HIV-1 virus, participates to HIV-1 Vif protein-mediated ubiquitination and degradation of APOBEC3G by mediating neddylation of cullin-5 (CUL5). In Homo sapiens (Human), this protein is NEDD8-conjugating enzyme UBE2F (UBE2F).